A 1640-amino-acid chain; its full sequence is RING finger protein 17 (1640 aa).

An RING-type zinc finger spans residues 30 to 73; the sequence is CTRCGRKVSVASGDHHKFPCGHAFCELCLLAPQEYTTSKCTDCE. A Phosphoserine modification is found at serine 134. Lysine 229 bears the N6-acetyllysine mark. Disordered regions lie at residues 348-376 and 413-435; these read TDET…TKEM and DDPI…APVG. Residues 360–373 are compositionally biased toward basic and acidic residues; it reads APDRHLEGKKKQPT. Tudor domains lie at 751–809 and 985–1044; these read CPLQ…FLEP and KWEC…LKTM. The span at 1170–1184 shows a compositional bias: basic and acidic residues; sequence NEHKVPDSKGKKSES. The disordered stretch occupies residues 1170–1191; it reads NEHKVPDSKGKKSESRSTGCYR. Tudor domains lie at 1246–1303 and 1496–1556; these read SWKK…PDTP and DFSS…LMQY.

As to quaternary structure, interacts with MXD1, MXD3, MXD4, MXI1 and PIWIL1. Self-associates. As to expression, expressed at high levels in adult testis. Expressed in male germ cells (at protein level). Expressed at lower levels in adult thyroid, submaxillary gland, ovary and epididymis.

The protein localises to the cytoplasm. It is found in the nucleus. Seems to be involved in regulation of transcriptional activity of MYC. In vitro, inhibits DNA-binding activity of Mad-MAX heterodimers. Can recruit Mad transcriptional repressors (MXD1, MXD3, MXD4 and MXI1) to the cytoplasm. May be involved in spermiogenesis. This Mus musculus (Mouse) protein is RING finger protein 17 (Rnf17).